The chain runs to 82 residues: uncharacterized protein (82 aa).

Residues 55 to 64 (DQNTAPSTPS) show a composition bias toward polar residues. The segment at 55–82 (DQNTAPSTPSKILPKRLPSQSNLNNNNN) is disordered.

This is an uncharacterized protein from Dictyostelium discoideum (Social amoeba).